A 183-amino-acid chain; its full sequence is Large ribosomal subunit protein uL6 (183 aa).

It belongs to the universal ribosomal protein uL6 family. As to quaternary structure, part of the 50S ribosomal subunit.

This protein binds to the 23S rRNA, and is important in its secondary structure. It is located near the subunit interface in the base of the L7/L12 stalk, and near the tRNA binding site of the peptidyltransferase center. This chain is Large ribosomal subunit protein uL6, found in Parabacteroides distasonis (strain ATCC 8503 / DSM 20701 / CIP 104284 / JCM 5825 / NCTC 11152).